The primary structure comprises 1517 residues: DNA-directed RNA polymerase subunit beta' (1517 aa).

Zn(2+) is bound by residues cysteine 71, cysteine 73, cysteine 86, and cysteine 89. Mg(2+) is bound by residues aspartate 482, aspartate 484, and aspartate 486. Zn(2+) is bound by residues cysteine 812, cysteine 886, cysteine 893, and cysteine 896.

The protein belongs to the RNA polymerase beta' chain family. In terms of assembly, the RNAP catalytic core consists of 2 alpha, 1 beta, 1 beta' and 1 omega subunit. When a sigma factor is associated with the core the holoenzyme is formed, which can initiate transcription. Mg(2+) serves as cofactor. Zn(2+) is required as a cofactor.

The enzyme catalyses RNA(n) + a ribonucleoside 5'-triphosphate = RNA(n+1) + diphosphate. In terms of biological role, DNA-dependent RNA polymerase catalyzes the transcription of DNA into RNA using the four ribonucleoside triphosphates as substrates. The protein is DNA-directed RNA polymerase subunit beta' of Campylobacter jejuni (strain RM1221).